Consider the following 141-residue polypeptide: MNVLKLLCKYHVDINISSHSSGRTSLHYAVLFNHKRALSFLLARGADVFKKDACMCTPLYYAMLSDQRDMVTMLLHSKKYIVKFRNKLDLHNAIETGNIKVIKTLLDNGVNENSVDKDGLTPLHYAVKYGNISIVKMFVIR.

ANK repeat units follow at residues 21-50 (SGRT…DVFK), 54-83 (CMCT…YIVK), 85-114 (RNKL…NENS), and 118-140 (DGLT…MFVI).

This Vertebrata (FPV) protein is Putative ankyrin repeat protein FPV223.